Here is a 361-residue protein sequence, read N- to C-terminus: Protein RecA (361 aa).

68 to 75 provides a ligand contact to ATP; that stretch reads GPESSGKT. The tract at residues 342-361 is disordered; sequence PEGAKENISAKDDVAVDTKE. The segment covering 344-361 has biased composition (basic and acidic residues); sequence GAKENISAKDDVAVDTKE.

It belongs to the RecA family.

The protein resides in the cytoplasm. Functionally, can catalyze the hydrolysis of ATP in the presence of single-stranded DNA, the ATP-dependent uptake of single-stranded DNA by duplex DNA, and the ATP-dependent hybridization of homologous single-stranded DNAs. It interacts with LexA causing its activation and leading to its autocatalytic cleavage. In Clostridium beijerinckii (strain ATCC 51743 / NCIMB 8052) (Clostridium acetobutylicum), this protein is Protein RecA.